The following is a 467-amino-acid chain: UDP-N-acetylmuramate--L-alanine ligase (467 aa).

ATP is bound at residue 114 to 120 (GTHGKTT).

It belongs to the MurCDEF family.

The protein resides in the cytoplasm. The catalysed reaction is UDP-N-acetyl-alpha-D-muramate + L-alanine + ATP = UDP-N-acetyl-alpha-D-muramoyl-L-alanine + ADP + phosphate + H(+). The protein operates within cell wall biogenesis; peptidoglycan biosynthesis. Its function is as follows. Cell wall formation. The protein is UDP-N-acetylmuramate--L-alanine ligase of Rhodopseudomonas palustris (strain TIE-1).